The following is a 116-amino-acid chain: MNEMLRAIEQEQLKNEVPNFGPGDTVKVHVRIIEGKRERIQVFEGVVLKRQGGGARETFTVRKMSFNVGVERTFPVHSPKIEKIEVTRKGKVRRAKLNYLRGRVGKAAKIKEARNK.

This sequence belongs to the bacterial ribosomal protein bL19 family.

Functionally, this protein is located at the 30S-50S ribosomal subunit interface and may play a role in the structure and function of the aminoacyl-tRNA binding site. The polypeptide is Large ribosomal subunit protein bL19 (Clostridioides difficile (strain 630) (Peptoclostridium difficile)).